We begin with the raw amino-acid sequence, 449 residues long: Aspartyl protease AED3 (449 aa).

A signal peptide spans 1-23 (MASSSLHFFFFLTLLLPFTFTTA). The Peptidase A1 domain maps to 104 to 444 (YVVRAKLGTP…DVPNSRIGIA (341 aa)). Residue Asp122 is part of the active site. Cysteines 132 and 138 form a disulfide. Asn140, Asn148, Asn184, Asn211, and Asn297 each carry an N-linked (GlcNAc...) asparagine glycan. Asp328 is a catalytic residue. Asn353 carries N-linked (GlcNAc...) asparagine glycosylation. Residues Cys366 and Cys405 are joined by a disulfide bond.

It belongs to the peptidase A1 family.

The protein resides in the secreted. It is found in the extracellular space. The protein localises to the apoplast. This chain is Aspartyl protease AED3, found in Arabidopsis thaliana (Mouse-ear cress).